A 416-amino-acid chain; its full sequence is Phosphoglycerate kinase (416 aa).

The (2R)-3-phosphoglycerate site is built by valine 23, aspartate 24, phenylalanine 25, asparagine 26, glutamine 38, arginine 39, serine 62, histidine 63, glycine 65, arginine 66, leucine 121, arginine 122, histidine 169, and arginine 170. Position 213 (glycine 213) interacts with ADP. Glycine 213 lines the CDP pocket. Residues alanine 214 and lysine 215 each coordinate AMP. Alanine 214 lines the ATP pocket. Alanine 214 is a binding site for Mg(2+). CDP is bound at residue aspartate 218. Residue aspartate 218 participates in Mg(2+) binding. Residue lysine 219 coordinates AMP. Residue lysine 219 participates in ATP binding. Glycine 237 contributes to the ADP binding site. Residue glycine 237 participates in CDP binding. 2 residues coordinate AMP: glycine 238 and glycine 312. Residues glycine 238 and glycine 312 each contribute to the ATP site. CDP is bound by residues glycine 337, alanine 339, and phenylalanine 342. ADP is bound at residue phenylalanine 342. Residue glutamate 343 coordinates AMP. Residues glutamate 343, aspartate 374, and threonine 375 each contribute to the ATP site. Residue aspartate 374 participates in Mg(2+) binding.

This sequence belongs to the phosphoglycerate kinase family. In terms of assembly, monomer. The cofactor is Mg(2+).

The protein resides in the cytoplasm. Its subcellular location is the mitochondrion. The catalysed reaction is (2R)-3-phosphoglycerate + ATP = (2R)-3-phospho-glyceroyl phosphate + ADP. The protein operates within carbohydrate degradation; glycolysis; pyruvate from D-glyceraldehyde 3-phosphate: step 2/5. Its function is as follows. Catalyzes one of the two ATP producing reactions in the glycolytic pathway via the reversible conversion of 1,3-diphosphoglycerate to 3-phosphoglycerate. Both L- and D- forms of purine and pyrimidine nucleotides can be used as substrates, but the activity is much lower on pyrimidines. Negatively regulates the biosynthesis of acetyl-CoA from pyruvate in the mitochondrion. This Funneliformis mosseae (Endomycorrhizal fungus) protein is Phosphoglycerate kinase (PGK).